We begin with the raw amino-acid sequence, 183 residues long: Small ribosomal subunit protein cS23y (183 aa).

Belongs to the chloroplast-specific ribosomal protein cS23 family. Part of the 30S ribosomal subunit.

It localises to the plastid. It is found in the chloroplast. Its function is as follows. Component of the chloroplast ribosome (chloro-ribosome), a dedicated translation machinery responsible for the synthesis of chloroplast genome-encoded proteins, including proteins of the transcription and translation machinery and components of the photosynthetic apparatus. The sequence is that of Small ribosomal subunit protein cS23y from Arabidopsis thaliana (Mouse-ear cress).